Reading from the N-terminus, the 349-residue chain is DNA repair protein XRCC3 (349 aa).

Methionine 1 bears the N-acetylmethionine mark. Position 107 to 114 (glycine 107 to threonine 114) interacts with ATP.

This sequence belongs to the RecA family. RAD51 subfamily. Interacts with RAD51C and RAD51. Part of the CX3 complex consisting of RAD51C and XRCC3; the complex has a ring-like structure arranged into a flat disc around a central channel; CX3 can interact with RAD51 in vitro. Forms a complex with FANCD2, BRCA2 and phosphorylated FANCG. Interacts with SWSAP1 and ZSWIM7; involved in homologous recombination repair. Interacts directly with PALB2 which may serve as a scaffold for a HR complex containing PALB2, BRCA2, RAD51C, RAD51 and XRCC3.

It localises to the nucleus. The protein resides in the cytoplasm. Its subcellular location is the perinuclear region. The protein localises to the mitochondrion matrix. Involved in the homologous recombination repair (HRR) pathway of double-stranded DNA, thought to repair chromosomal fragmentation, translocations and deletions. Part of the RAD21 paralog protein complex CX3 which acts in the BRCA1-BRCA2-dependent HR pathway. Upon DNA damage, CX3 acts downstream of RAD51 recruitment; the complex binds predominantly to the intersection of the four duplex arms of the Holliday junction (HJ) and to junctions of replication forks. Involved in HJ resolution and thus in processing HR intermediates late in the DNA repair process; the function may be linked to the CX3 complex and seems to involve GEN1 during mitotic cell cycle progression. Part of a PALB2-scaffolded HR complex containing BRCA2 and RAD51C and which is thought to play a role in DNA repair by HR. Plays a role in regulating mitochondrial DNA copy number under conditions of oxidative stress in the presence of RAD51 and RAD51C. In Mus musculus (Mouse), this protein is DNA repair protein XRCC3 (Xrcc3).